A 143-amino-acid polypeptide reads, in one-letter code: Mini-ribonuclease 3 (143 aa).

Residue Asp23 is part of the active site.

Belongs to the MrnC RNase family. In terms of assembly, homodimer. Mg(2+) is required as a cofactor.

Its subcellular location is the cytoplasm. Functionally, involved in correct processing of both the 5' and 3' ends of 23S rRNA precursor. Processes 30S rRNA precursor transcript even in absence of ribonuclease 3 (Rnc); Rnc processes 30S rRNA into smaller rRNA precursors. Cleaves more efficiently on assembled 50S ribosomal subunits. Cleavage is strongly stimulated by ribosomal protein L3 (RplC); 20-30% DMSO can replace RplC, suggesting RplC may alter rRNA conformation. This Bacillus subtilis (strain 168) protein is Mini-ribonuclease 3 (mrnC).